A 123-amino-acid chain; its full sequence is MAEHNELGKLGEDLAAEHLEKENYKILERNWVYKNAEVDILAQKENILVVVEVKTRSSLDFGSPQDFVKPKKIQLLIKAVNAYINYREKDFEEDINVRFDIVAIHKNGESFAIEHLTDAFYHF.

The protein belongs to the UPF0102 family.

This is UPF0102 protein Fjoh_1217 from Flavobacterium johnsoniae (strain ATCC 17061 / DSM 2064 / JCM 8514 / BCRC 14874 / CCUG 350202 / NBRC 14942 / NCIMB 11054 / UW101) (Cytophaga johnsonae).